Here is a 928-residue protein sequence, read N- to C-terminus: MORC family CW-type zinc finger protein 4 (928 aa).

The segment at 417–469 (RIPDQTWVQCDECLKWRRLPGMVDPSTLPARWFCYYNPHPKFKRCSVPEEQER) adopts a CW-type zinc-finger fold. Residues Cys-426, Cys-429, Cys-450, and Cys-461 each coordinate Zn(2+). Disordered stretches follow at residues 474–510 (LHRS…TPPL), 527–546 (NSPS…PRLK), 599–649 (AYPE…DQDQ), and 718–766 (RAES…LKRT). Positions 485 to 497 (AAEKKQKPMESDK) are enriched in basic and acidic residues. 3 stretches are compositionally biased toward basic and acidic residues: residues 626 to 636 (ESNKHTEENRE), 739 to 748 (KGKDCQDSRS), and 756 to 766 (TPKESEELKRT). Residues 758-867 (KESEELKRTT…LEVLQKAQVS (110 aa)) adopt a coiled-coil conformation.

The protein localises to the nucleus. Its function is as follows. Histone methylation reader which binds to non-methylated (H3K4me0), monomethylated (H3K4me1), dimethylated (H3K4me2) and trimethylated (H3K4me3) 'Lys-4' on histone H3. The order of binding preference is H3K4me3 &gt; H3K4me2 &gt; H3K4me1 &gt; H3K4me0. This Mus musculus (Mouse) protein is MORC family CW-type zinc finger protein 4 (Morc4).